Reading from the N-terminus, the 329-residue chain is 4-hydroxythreonine-4-phosphate dehydrogenase (329 aa).

His-136 and Thr-137 together coordinate substrate. A divalent metal cation contacts are provided by His-166, His-211, and His-266. Residues Lys-274, Asn-283, and Arg-292 each contribute to the substrate site.

Belongs to the PdxA family. In terms of assembly, homodimer. Zn(2+) serves as cofactor. Mg(2+) is required as a cofactor. The cofactor is Co(2+).

Its subcellular location is the cytoplasm. It catalyses the reaction 4-(phosphooxy)-L-threonine + NAD(+) = 3-amino-2-oxopropyl phosphate + CO2 + NADH. Its pathway is cofactor biosynthesis; pyridoxine 5'-phosphate biosynthesis; pyridoxine 5'-phosphate from D-erythrose 4-phosphate: step 4/5. Functionally, catalyzes the NAD(P)-dependent oxidation of 4-(phosphooxy)-L-threonine (HTP) into 2-amino-3-oxo-4-(phosphooxy)butyric acid which spontaneously decarboxylates to form 3-amino-2-oxopropyl phosphate (AHAP). The chain is 4-hydroxythreonine-4-phosphate dehydrogenase from Pseudomonas putida (strain ATCC 47054 / DSM 6125 / CFBP 8728 / NCIMB 11950 / KT2440).